A 58-amino-acid polypeptide reads, in one-letter code: Putative antitoxin VapB16 (58 aa).

Functionally, putative antitoxin component of a possible type II toxin-antitoxin (TA) system. The cognate toxin is VapC16. This chain is Putative antitoxin VapB16 (vapB16), found in Mycobacterium tuberculosis (strain ATCC 25618 / H37Rv).